The chain runs to 334 residues: Glycerol-3-phosphate dehydrogenase [NAD(P)+] (334 aa).

NADPH-binding residues include serine 14, tyrosine 15, arginine 35, and lysine 109. Sn-glycerol 3-phosphate is bound by residues lysine 109, glycine 138, and threonine 140. Position 142 (alanine 142) interacts with NADPH. Residues lysine 194, aspartate 247, serine 257, arginine 258, and asparagine 259 each contribute to the sn-glycerol 3-phosphate site. The active-site Proton acceptor is lysine 194. Arginine 258 lines the NADPH pocket. Residues valine 282 and glutamate 284 each contribute to the NADPH site.

Belongs to the NAD-dependent glycerol-3-phosphate dehydrogenase family.

It localises to the cytoplasm. It catalyses the reaction sn-glycerol 3-phosphate + NAD(+) = dihydroxyacetone phosphate + NADH + H(+). It carries out the reaction sn-glycerol 3-phosphate + NADP(+) = dihydroxyacetone phosphate + NADPH + H(+). Its pathway is membrane lipid metabolism; glycerophospholipid metabolism. Functionally, catalyzes the reduction of the glycolytic intermediate dihydroxyacetone phosphate (DHAP) to sn-glycerol 3-phosphate (G3P), the key precursor for phospholipid synthesis. This Colwellia psychrerythraea (strain 34H / ATCC BAA-681) (Vibrio psychroerythus) protein is Glycerol-3-phosphate dehydrogenase [NAD(P)+].